An 884-amino-acid chain; its full sequence is Alanine--tRNA ligase (884 aa).

H572, H576, C673, and H677 together coordinate Zn(2+).

It belongs to the class-II aminoacyl-tRNA synthetase family. Zn(2+) serves as cofactor.

Its subcellular location is the cytoplasm. It carries out the reaction tRNA(Ala) + L-alanine + ATP = L-alanyl-tRNA(Ala) + AMP + diphosphate. Functionally, catalyzes the attachment of alanine to tRNA(Ala) in a two-step reaction: alanine is first activated by ATP to form Ala-AMP and then transferred to the acceptor end of tRNA(Ala). Also edits incorrectly charged Ser-tRNA(Ala) and Gly-tRNA(Ala) via its editing domain. The protein is Alanine--tRNA ligase of Xylella fastidiosa (strain M12).